The chain runs to 152 residues: Ribonuclease pancreatic gamma-type (152 aa).

A signal peptide spans 1–25 (MGLEKSFILFSLLVLVLGCVQPSLV). The segment at 26 to 48 (GESKESPSEKFKRRHMDEEGPYQ) is disordered. Basic and acidic residues predominate over residues 27-43 (ESKESPSEKFKRRHMDE). Lysine 35 and arginine 38 together coordinate substrate. The active-site Proton acceptor is histidine 40. 4 disulfides stabilise this stretch: cysteine 54–cysteine 112, cysteine 68–cysteine 123, cysteine 86–cysteine 138, and cysteine 93–cysteine 100. Substrate-binding positions include 69 to 73 (KPLNT) and lysine 94. Histidine 147 serves as the catalytic Proton donor.

This sequence belongs to the pancreatic ribonuclease family. Monomer.

The protein localises to the secreted. It catalyses the reaction an [RNA] containing cytidine + H2O = an [RNA]-3'-cytidine-3'-phosphate + a 5'-hydroxy-ribonucleotide-3'-[RNA].. It carries out the reaction an [RNA] containing uridine + H2O = an [RNA]-3'-uridine-3'-phosphate + a 5'-hydroxy-ribonucleotide-3'-[RNA].. Endonuclease that catalyzes the cleavage of RNA on the 3' side of pyrimidine nucleotides. Acts on single-stranded and double-stranded RNA. The polypeptide is Ribonuclease pancreatic gamma-type (Rattus fuscipes (Bush rat)).